The following is a 379-amino-acid chain: Ribosomal RNA large subunit methyltransferase G (379 aa).

It belongs to the methyltransferase superfamily. RlmG family.

It is found in the cytoplasm. It catalyses the reaction guanosine(1835) in 23S rRNA + S-adenosyl-L-methionine = N(2)-methylguanosine(1835) in 23S rRNA + S-adenosyl-L-homocysteine + H(+). Specifically methylates the guanine in position 1835 (m2G1835) of 23S rRNA. In Pectobacterium atrosepticum (strain SCRI 1043 / ATCC BAA-672) (Erwinia carotovora subsp. atroseptica), this protein is Ribosomal RNA large subunit methyltransferase G.